The primary structure comprises 66 residues: Large ribosomal subunit protein bL28 (66 aa).

The disordered stretch occupies residues 1–26 (MAKDAITGARTRFGNQRSHALNSSRR). Polar residues predominate over residues 13 to 25 (FGNQRSHALNSSR).

It belongs to the bacterial ribosomal protein bL28 family.

The chain is Large ribosomal subunit protein bL28 from Leuconostoc citreum (strain KM20).